We begin with the raw amino-acid sequence, 350 residues long: Hydroxymethylglutaryl-CoA synthase (350 aa).

The active-site Proton donor/acceptor is E83. C115 serves as the catalytic Acyl-thioester intermediate. The (3S)-3-hydroxy-3-methylglutaryl-CoA site is built by C115 and T156. R204 contributes to the CoA binding site. (3S)-3-hydroxy-3-methylglutaryl-CoA contacts are provided by T206 and H239. The active-site Proton donor/acceptor is the H239. K244 is a CoA binding site. (3S)-3-hydroxy-3-methylglutaryl-CoA-binding residues include N271 and S301.

Belongs to the thiolase-like superfamily. Archaeal HMG-CoA synthase family. As to quaternary structure, interacts with acetoacetyl-CoA thiolase that catalyzes the precedent step in the pathway and with a DUF35 protein. The acetoacetyl-CoA thiolase/HMG-CoA synthase complex channels the intermediate via a fused CoA-binding site, which allows for efficient coupling of the endergonic thiolase reaction with the exergonic HMGCS reaction.

The enzyme catalyses acetoacetyl-CoA + acetyl-CoA + H2O = (3S)-3-hydroxy-3-methylglutaryl-CoA + CoA + H(+). The protein operates within metabolic intermediate biosynthesis; (R)-mevalonate biosynthesis; (R)-mevalonate from acetyl-CoA: step 2/3. In terms of biological role, catalyzes the condensation of acetyl-CoA with acetoacetyl-CoA to form 3-hydroxy-3-methylglutaryl-CoA (HMG-CoA). Functions in the mevalonate (MVA) pathway leading to isopentenyl diphosphate (IPP), a key precursor for the biosynthesis of isoprenoid compounds that are building blocks of archaeal membrane lipids. The sequence is that of Hydroxymethylglutaryl-CoA synthase from Thermococcus sibiricus (strain DSM 12597 / MM 739).